The primary structure comprises 574 residues: Sulfate adenylyltransferase (574 aa).

An N-terminal region spans residues 1–170; that stretch reads MANTPHGGVL…LEAINRLEHY (170 aa). The segment at 171–395 is catalytic; that stretch reads DFLDLRFTPS…LREENPLPAE (225 aa). Q198 is a sulfate binding site. ATP is bound by residues 198 to 201 and 292 to 295; these read QTRN and GRDH. Residues T199, R200, and N201 contribute to the active site. Residue R200 participates in sulfate binding. A sulfate-binding site is contributed by A296. M334 is a binding site for ATP. Residues 396-574 form an allosteric regulation domain; adenylyl-sulfate kinase-like region; sequence KGFTVFMTGY…LESNGLLDRL (179 aa). Residues 435-438, R452, 478-479, and K516 each bind 3'-phosphoadenylyl sulfate; these read ENVR and IA.

In the N-terminal section; belongs to the sulfate adenylyltransferase family. The protein in the C-terminal section; belongs to the APS kinase family. As to quaternary structure, homohexamer. Dimer of trimers.

The protein localises to the cytoplasm. The catalysed reaction is sulfate + ATP + H(+) = adenosine 5'-phosphosulfate + diphosphate. It participates in sulfur metabolism; hydrogen sulfide biosynthesis; sulfite from sulfate: step 1/3. Allosterically inhibited by 3'-phosphoadenosine 5'-phosphosulfate (PAPS). Its function is as follows. Catalyzes the first intracellular reaction of sulfate assimilation, forming adenosine-5'-phosphosulfate (APS) from inorganic sulfate and ATP. Plays an important role in sulfate activation as a component of the biosynthesis pathway of sulfur-containing amino acids. The polypeptide is Sulfate adenylyltransferase (Gibberella zeae (strain ATCC MYA-4620 / CBS 123657 / FGSC 9075 / NRRL 31084 / PH-1) (Wheat head blight fungus)).